A 427-amino-acid polypeptide reads, in one-letter code: MFVDIAKIYVKAGDGGDGIVAFRREKYVPAGGPAGGDGGKGGDVIFVADRELNTLLDFKYKRHYKAQNGERGGPNNMHGKDGEDLIIKVPVGTVIKDAETGEIIADLSREGDRAIVAHGGRGGRGNSHFATSTRQVPRFAEVGEKGDELWVILELKVLADVGLIGYPNVGKSTFLSVATNARPEIANYPFTTKYPNLGIVYISEGESFVLADIPGLIEGASEGAGLGHQFLRHVERTKVLIHIVDVSGSEGREPVEDFIKINEELKKYSPELAQKPQIVAANKMDLPDAQAYFELFKEEIEKMGYEVYPVSAATGMGVREVLKRAYELLKQQKAAENVEEDAKPRTFVYYKKKDVKPLTIRKENGVYVVEGTVVEKVARNIVLNDHDSFRYFQNFLNKLGVFDKLREMGIQDGDIVRILDVEFEYYE.

Residues 1–158 (MFVDIAKIYV…LWVILELKVL (158 aa)) enclose the Obg domain. An OBG-type G domain is found at 159–330 (ADVGLIGYPN…VLKRAYELLK (172 aa)). GTP-binding positions include 165 to 172 (GYPNVGKS), 190 to 194 (FTTKY), 212 to 215 (DIPG), 282 to 285 (NKMD), and 311 to 313 (SAA). Residues Ser172 and Thr192 each contribute to the Mg(2+) site. One can recognise an OCT domain in the interval 347–427 (FVYYKKKDVK…ILDVEFEYYE (81 aa)).

This sequence belongs to the TRAFAC class OBG-HflX-like GTPase superfamily. OBG GTPase family. As to quaternary structure, monomer. Requires Mg(2+) as cofactor.

The protein resides in the cytoplasm. In terms of biological role, an essential GTPase which binds GTP, GDP and possibly (p)ppGpp with moderate affinity, with high nucleotide exchange rates and a fairly low GTP hydrolysis rate. Plays a role in control of the cell cycle, stress response, ribosome biogenesis and in those bacteria that undergo differentiation, in morphogenesis control. The polypeptide is GTPase Obg (Caldicellulosiruptor bescii (strain ATCC BAA-1888 / DSM 6725 / KCTC 15123 / Z-1320) (Anaerocellum thermophilum)).